The chain runs to 463 residues: Interferon-inducible GTPase 5 (463 aa).

An IRG-type G domain is found at 53 to 235; it reads IRLEVGVTGE…PTLVSTWEHD (183 aa). Residues 62-69, 87-91, 169-171, and 216-218 contribute to the GTP site; these read ESGAGKSS, TGVME, KVD, and SNL. Phosphoserine occurs at positions 247 and 304. Residues 404–437 form a disordered region; the sequence is LEDDEPQPEVSLEVASDNGVEKGGSGEGGGEEAP.

It belongs to the TRAFAC class dynamin-like GTPase superfamily. IRG family. As to expression, abundantly expressed in semen (at protein level).

The protein localises to the cell projection. It localises to the cilium. Its subcellular location is the flagellum. It is found in the lipid droplet. It carries out the reaction GTP + H2O = GDP + phosphate + H(+). In terms of biological role, required for sperm motility and therefore male fertility, via positive regulation of spermatozoa fibrous sheath formation. This Homo sapiens (Human) protein is Interferon-inducible GTPase 5.